The primary structure comprises 299 residues: Phosphoribosylaminoimidazole-succinocarboxamide synthase (299 aa).

The protein belongs to the SAICAR synthetase family.

It catalyses the reaction 5-amino-1-(5-phospho-D-ribosyl)imidazole-4-carboxylate + L-aspartate + ATP = (2S)-2-[5-amino-1-(5-phospho-beta-D-ribosyl)imidazole-4-carboxamido]succinate + ADP + phosphate + 2 H(+). Its pathway is purine metabolism; IMP biosynthesis via de novo pathway; 5-amino-1-(5-phospho-D-ribosyl)imidazole-4-carboxamide from 5-amino-1-(5-phospho-D-ribosyl)imidazole-4-carboxylate: step 1/2. This is Phosphoribosylaminoimidazole-succinocarboxamide synthase from Leifsonia xyli subsp. xyli (strain CTCB07).